Here is a 316-residue protein sequence, read N- to C-terminus: Methionyl-tRNA formyltransferase (316 aa).

112-115 (SLLP) provides a ligand contact to (6S)-5,6,7,8-tetrahydrofolate.

It belongs to the Fmt family.

The enzyme catalyses L-methionyl-tRNA(fMet) + (6R)-10-formyltetrahydrofolate = N-formyl-L-methionyl-tRNA(fMet) + (6S)-5,6,7,8-tetrahydrofolate + H(+). Functionally, attaches a formyl group to the free amino group of methionyl-tRNA(fMet). The formyl group appears to play a dual role in the initiator identity of N-formylmethionyl-tRNA by promoting its recognition by IF2 and preventing the misappropriation of this tRNA by the elongation apparatus. The protein is Methionyl-tRNA formyltransferase of Glaesserella parasuis serovar 5 (strain SH0165) (Haemophilus parasuis).